A 403-amino-acid chain; its full sequence is Queuine tRNA-ribosyltransferase catalytic subunit 1 (403 aa).

Residue A2 is modified to N-acetylalanine. The Proton acceptor role is filled by D105. Residue 105–109 (DSGGF) coordinates queuine. S139 is subject to Phosphoserine. D159, Q202, and G229 together coordinate queuine. Residues 260-266 (GVGYATD) form an RNA binding region. D279 (nucleophile) is an active-site residue. The segment at 284-288 (TRTAR) is RNA binding; important for wobble base 34 recognition. Zn(2+)-binding residues include C317, C319, C322, and H348.

It belongs to the queuine tRNA-ribosyltransferase family. Heterodimer of a catalytic subunit QTRT1 and an accessory subunit QTRT2. Zn(2+) is required as a cofactor. As to expression, expressed in brain, heart, kidney, liver, ling, skeletal muscle, spleen and testis.

The protein localises to the cytoplasm. The protein resides in the mitochondrion outer membrane. It localises to the nucleus. The enzyme catalyses guanosine(34) in tRNA + queuine = queuosine(34) in tRNA + guanine. Catalytic subunit of the queuine tRNA-ribosyltransferase (TGT) that catalyzes the base-exchange of a guanine (G) residue with queuine (Q) at position 34 (anticodon wobble position) in tRNAs with GU(N) anticodons (tRNA-Asp, -Asn, -His and -Tyr), resulting in the hypermodified nucleoside queuosine (7-(((4,5-cis-dihydroxy-2-cyclopenten-1-yl)amino)methyl)-7-deazaguanosine). Catalysis occurs through a double-displacement mechanism. The nucleophile active site attacks the C1' of nucleotide 34 to detach the guanine base from the RNA, forming a covalent enzyme-RNA intermediate. The proton acceptor active site deprotonates the incoming queuine, allowing a nucleophilic attack on the C1' of the ribose to form the product. Modification of cytoplasmic tRNAs with queuosine controls the elongation speed of cognate codons, thereby ensuring the correct folding of nascent proteins to maintain proteome integrity. In Mus musculus (Mouse), this protein is Queuine tRNA-ribosyltransferase catalytic subunit 1.